A 453-amino-acid chain; its full sequence is Methylenetetrahydrofolate--tRNA-(uracil-5-)-methyltransferase TrmFO (453 aa).

An FAD-binding site is contributed by 10 to 15 (GGGLAG). The segment at 433 to 453 (ELAPWIDSAPPTAVPAAPAAG) is disordered. Low complexity predominate over residues 441-453 (APPTAVPAAPAAG).

It belongs to the MnmG family. TrmFO subfamily. FAD serves as cofactor.

It localises to the cytoplasm. It catalyses the reaction uridine(54) in tRNA + (6R)-5,10-methylene-5,6,7,8-tetrahydrofolate + NADH + H(+) = 5-methyluridine(54) in tRNA + (6S)-5,6,7,8-tetrahydrofolate + NAD(+). It carries out the reaction uridine(54) in tRNA + (6R)-5,10-methylene-5,6,7,8-tetrahydrofolate + NADPH + H(+) = 5-methyluridine(54) in tRNA + (6S)-5,6,7,8-tetrahydrofolate + NADP(+). Its function is as follows. Catalyzes the folate-dependent formation of 5-methyl-uridine at position 54 (M-5-U54) in all tRNAs. The chain is Methylenetetrahydrofolate--tRNA-(uracil-5-)-methyltransferase TrmFO from Anaeromyxobacter dehalogenans (strain 2CP-1 / ATCC BAA-258).